Consider the following 117-residue polypeptide: Large ribosomal subunit protein bL20c (117 aa).

This sequence belongs to the bacterial ribosomal protein bL20 family.

The protein resides in the plastid. Its subcellular location is the chloroplast. In terms of biological role, binds directly to 23S ribosomal RNA and is necessary for the in vitro assembly process of the 50S ribosomal subunit. It is not involved in the protein synthesizing functions of that subunit. In Vitis vinifera (Grape), this protein is Large ribosomal subunit protein bL20c.